We begin with the raw amino-acid sequence, 66 residues long: Stress-induced protein KIN1 (66 aa).

The span at 1-13 (MSETNKNAFQAGQ) shows a compositional bias: polar residues. Positions 1-52 (MSETNKNAFQAGQTAGKAEEKSNVLLDKAKDAAAGAGAGAQQAGKSVSDAAA) are disordered. Basic and acidic residues predominate over residues 17–31 (KAEEKSNVLLDKAKD). Repeats lie at residues 31–35 (DAAAG) and 49–53 (DAAAG). Residues 32–45 (AAAGAGAGAQQAGK) show a composition bias toward low complexity.

This chain is Stress-induced protein KIN1 (KIN1), found in Arabidopsis thaliana (Mouse-ear cress).